Reading from the N-terminus, the 213-residue chain is Guanylate kinase (213 aa).

The Guanylate kinase-like domain occupies 6-186 (GLLIILSSPS…TEERLKTIVS (181 aa)). 13-20 (SPSGAGKS) lines the ATP pocket.

The protein belongs to the guanylate kinase family.

The protein resides in the cytoplasm. It carries out the reaction GMP + ATP = GDP + ADP. Functionally, essential for recycling GMP and indirectly, cGMP. This Ruegeria pomeroyi (strain ATCC 700808 / DSM 15171 / DSS-3) (Silicibacter pomeroyi) protein is Guanylate kinase.